A 333-amino-acid chain; its full sequence is DNA-directed RNA polymerase subunit alpha (333 aa).

The tract at residues 1-234 is alpha N-terminal domain (alpha-NTD); it reads MQISVNEFLT…QQLAAFVDLK (234 aa). Residues 248–333 form an alpha C-terminal domain (alpha-CTD) region; sequence IDPILLRPVD…SLKKDDKATA (86 aa).

This sequence belongs to the RNA polymerase alpha chain family. As to quaternary structure, homodimer. The RNAP catalytic core consists of 2 alpha, 1 beta, 1 beta' and 1 omega subunit. When a sigma factor is associated with the core the holoenzyme is formed, which can initiate transcription.

It catalyses the reaction RNA(n) + a ribonucleoside 5'-triphosphate = RNA(n+1) + diphosphate. In terms of biological role, DNA-dependent RNA polymerase catalyzes the transcription of DNA into RNA using the four ribonucleoside triphosphates as substrates. The polypeptide is DNA-directed RNA polymerase subunit alpha (Ectopseudomonas mendocina (strain ymp) (Pseudomonas mendocina)).